Reading from the N-terminus, the 315-residue chain is Acyl transferase (315 aa).

Active-site charge relay system residues include serine 116, aspartate 213, and histidine 243.

It belongs to the LuxD family.

It participates in lipid metabolism; fatty acid reduction for biolumincescence. Functionally, acyl transferase is part of the fatty acid reductase system required for aldehyde biosynthesis; it produces fatty acids for the luminescent reaction. The chain is Acyl transferase from Photobacterium leiognathi.